Consider the following 196-residue polypeptide: Glycerol-3-phosphate acyltransferase (196 aa).

The next 5 membrane-spanning stretches (helical) occupy residues 4–24 (LTLTMIIAAYLIGSISSAILV), 56–76 (ATVLFLDILKGTIPVWGAYFL), 80–100 (SLYLGFIGVSACLGHMYPIFF), 114–134 (TLLPIGFTLGGLLILTWVLVV), and 155–175 (VYFLKPLYVYPTLMLSALILF).

The protein belongs to the PlsY family. In terms of assembly, probably interacts with PlsX.

The protein resides in the cell inner membrane. The enzyme catalyses an acyl phosphate + sn-glycerol 3-phosphate = a 1-acyl-sn-glycero-3-phosphate + phosphate. It functions in the pathway lipid metabolism; phospholipid metabolism. In terms of biological role, catalyzes the transfer of an acyl group from acyl-phosphate (acyl-PO(4)) to glycerol-3-phosphate (G3P) to form lysophosphatidic acid (LPA). This enzyme utilizes acyl-phosphate as fatty acyl donor, but not acyl-CoA or acyl-ACP. The sequence is that of Glycerol-3-phosphate acyltransferase from Colwellia psychrerythraea (strain 34H / ATCC BAA-681) (Vibrio psychroerythus).